Here is a 79-residue protein sequence, read N- to C-terminus: UPF0154 protein SAG1601 (79 aa).

A helical membrane pass occupies residues 5–25 (IWILLIIVALFGGLVGGIFIA).

Belongs to the UPF0154 family.

Its subcellular location is the membrane. This is UPF0154 protein SAG1601 from Streptococcus agalactiae serotype V (strain ATCC BAA-611 / 2603 V/R).